The chain runs to 312 residues: DNA-directed RNA polymerase subunit alpha (312 aa).

The tract at residues 1 to 229 is alpha N-terminal domain (alpha-NTD); the sequence is MLQYQIDRID…ELFQPLATVT (229 aa). The alpha C-terminal domain (alpha-CTD) stretch occupies residues 246–312; that stretch reads IPLEELNLSV…ISIPQSRTSV (67 aa).

Belongs to the RNA polymerase alpha chain family. In cyanobacteria the RNAP catalytic core is composed of 2 alpha, 1 beta, 1 beta', 1 gamma and 1 omega subunit. When a sigma factor is associated with the core the holoenzyme is formed, which can initiate transcription.

The enzyme catalyses RNA(n) + a ribonucleoside 5'-triphosphate = RNA(n+1) + diphosphate. In terms of biological role, DNA-dependent RNA polymerase catalyzes the transcription of DNA into RNA using the four ribonucleoside triphosphates as substrates. This chain is DNA-directed RNA polymerase subunit alpha, found in Prochlorococcus marinus subsp. pastoris (strain CCMP1986 / NIES-2087 / MED4).